We begin with the raw amino-acid sequence, 422 residues long: Protein FAM53B (422 aa).

S119, S168, S170, S180, S213, and S269 each carry phosphoserine. Disordered stretches follow at residues 193–225 (GQPC…GRLD) and 243–269 (CPPS…RSRS). A compositionally biased stretch (low complexity) spans 244–269 (PPSANSTPASTPELARRSSGLARSRS). The Nuclear localization signal signature appears at 282–285 (KRRR). 2 positions are modified to phosphoserine: S335 and S344.

The protein belongs to the FAM53 family. In terms of assembly, interacts with CTNNB1.

Its subcellular location is the nucleus. Functionally, acts as a regulator of Wnt signaling pathway by regulating beta-catenin (CTNNB1) nuclear localization. The chain is Protein FAM53B from Mus musculus (Mouse).